Consider the following 628-residue polypeptide: Zinc finger protein 555 (628 aa).

In terms of domain architecture, KRAB spans 4–77 (VVFEDVAVDF…ESKIATFTRN (74 aa)). The segment at 172-194 (YQCQECGQAYSCRSHLRMHVRTH) adopts a C2H2-type 1; degenerate zinc-finger fold. 14 consecutive C2H2-type zinc fingers follow at residues 200-222 (YVCK…VRIH), 228-250 (YECK…LRSH), 256-278 (YKCK…TITH), 284-306 (YKCK…MISH), 312-334 (HKCK…MITH), 340-362 (YECK…ERIH), 368-390 (YECK…ERTH), 396-418 (YECN…MRVH), 424-446 (YECK…MRTH), 452-474 (YECK…VRMH), 480-502 (YECK…MRRH), 508-530 (YKCK…VRTH), 536-558 (YECK…MRLH), and 564-586 (YQCK…VRIH).

This sequence belongs to the krueppel C2H2-type zinc-finger protein family.

It is found in the nucleus. Functionally, may be involved in transcriptional regulation. This is Zinc finger protein 555 (ZNF555) from Homo sapiens (Human).